Consider the following 451-residue polypeptide: Bifunctional protein GlmU (451 aa).

Residues 1 to 229 (MQRHAIILAA…FDEIIGVNDR (229 aa)) form a pyrophosphorylase region. Residues 8 to 11 (LAAG), Lys-22, Gln-72, and 77 to 78 (GT) contribute to the UDP-N-acetyl-alpha-D-glucosamine site. Residue Asp-102 coordinates Mg(2+). Gly-139, Glu-154, and Asn-227 together coordinate UDP-N-acetyl-alpha-D-glucosamine. A Mg(2+)-binding site is contributed by Asn-227. The tract at residues 230–250 (LMLSEAEKALQQRINRYHMEN) is linker. Residues 251-451 (GVTIIDPSST…QVNKEGYLKK (201 aa)) form an N-acetyltransferase region. Residues Arg-332 and Lys-350 each coordinate UDP-N-acetyl-alpha-D-glucosamine. His-362 functions as the Proton acceptor in the catalytic mechanism. The UDP-N-acetyl-alpha-D-glucosamine site is built by Tyr-365 and Asn-376. Residues 385–386 (NY), Ala-422, and Arg-439 contribute to the acetyl-CoA site.

This sequence in the N-terminal section; belongs to the N-acetylglucosamine-1-phosphate uridyltransferase family. The protein in the C-terminal section; belongs to the transferase hexapeptide repeat family. As to quaternary structure, homotrimer. Requires Mg(2+) as cofactor.

The protein resides in the cytoplasm. The enzyme catalyses alpha-D-glucosamine 1-phosphate + acetyl-CoA = N-acetyl-alpha-D-glucosamine 1-phosphate + CoA + H(+). The catalysed reaction is N-acetyl-alpha-D-glucosamine 1-phosphate + UTP + H(+) = UDP-N-acetyl-alpha-D-glucosamine + diphosphate. Its pathway is nucleotide-sugar biosynthesis; UDP-N-acetyl-alpha-D-glucosamine biosynthesis; N-acetyl-alpha-D-glucosamine 1-phosphate from alpha-D-glucosamine 6-phosphate (route II): step 2/2. It participates in nucleotide-sugar biosynthesis; UDP-N-acetyl-alpha-D-glucosamine biosynthesis; UDP-N-acetyl-alpha-D-glucosamine from N-acetyl-alpha-D-glucosamine 1-phosphate: step 1/1. The protein operates within bacterial outer membrane biogenesis; LPS lipid A biosynthesis. In terms of biological role, catalyzes the last two sequential reactions in the de novo biosynthetic pathway for UDP-N-acetylglucosamine (UDP-GlcNAc). The C-terminal domain catalyzes the transfer of acetyl group from acetyl coenzyme A to glucosamine-1-phosphate (GlcN-1-P) to produce N-acetylglucosamine-1-phosphate (GlcNAc-1-P), which is converted into UDP-GlcNAc by the transfer of uridine 5-monophosphate (from uridine 5-triphosphate), a reaction catalyzed by the N-terminal domain. This chain is Bifunctional protein GlmU, found in Staphylococcus epidermidis.